Reading from the N-terminus, the 237-residue chain is 2-C-methyl-D-erythritol 4-phosphate cytidylyltransferase (237 aa).

Belongs to the IspD/TarI cytidylyltransferase family. IspD subfamily.

The catalysed reaction is 2-C-methyl-D-erythritol 4-phosphate + CTP + H(+) = 4-CDP-2-C-methyl-D-erythritol + diphosphate. It participates in isoprenoid biosynthesis; isopentenyl diphosphate biosynthesis via DXP pathway; isopentenyl diphosphate from 1-deoxy-D-xylulose 5-phosphate: step 2/6. In terms of biological role, catalyzes the formation of 4-diphosphocytidyl-2-C-methyl-D-erythritol from CTP and 2-C-methyl-D-erythritol 4-phosphate (MEP). The protein is 2-C-methyl-D-erythritol 4-phosphate cytidylyltransferase of Vibrio vulnificus (strain YJ016).